We begin with the raw amino-acid sequence, 305 residues long: Homoserine O-acetyltransferase (305 aa).

The active-site Acyl-thioester intermediate is the cysteine 142. Substrate contacts are provided by lysine 163 and serine 192. Histidine 235 functions as the Proton acceptor in the catalytic mechanism. Glutamate 237 is an active-site residue. Residue arginine 249 participates in substrate binding.

The protein belongs to the MetA family.

The protein localises to the cytoplasm. It catalyses the reaction L-homoserine + acetyl-CoA = O-acetyl-L-homoserine + CoA. The protein operates within amino-acid biosynthesis; L-methionine biosynthesis via de novo pathway; O-acetyl-L-homoserine from L-homoserine: step 1/1. Functionally, transfers an acetyl group from acetyl-CoA to L-homoserine, forming acetyl-L-homoserine. The chain is Homoserine O-acetyltransferase from Roseobacter denitrificans (strain ATCC 33942 / OCh 114) (Erythrobacter sp. (strain OCh 114)).